Reading from the N-terminus, the 156-residue chain is MKVIEGGFPAPNAKIAIVISRFNSFINESLLSGAIDTLKRHGQVSEDNITVVRCPGAVELPLVAQRVAKTGKYDAIVSLGTVIRGGTPHFDYVCSECNKGLAQVSLEYSLPVAFGVLTVDTIDQAIERAGTKAGNKGAEAALSALEMINVLSEIDS.

Residues F22, 57 to 59 (AVE), and 81 to 83 (TVI) each bind 5-amino-6-(D-ribitylamino)uracil. A (2S)-2-hydroxy-3-oxobutyl phosphate-binding site is contributed by 86 to 87 (GT). Catalysis depends on H89, which acts as the Proton donor. F114 is a binding site for 5-amino-6-(D-ribitylamino)uracil. Position 128 (R128) interacts with (2S)-2-hydroxy-3-oxobutyl phosphate.

This sequence belongs to the DMRL synthase family. Forms an icosahedral capsid composed of 60 subunits, arranged as a dodecamer of pentamers.

The catalysed reaction is (2S)-2-hydroxy-3-oxobutyl phosphate + 5-amino-6-(D-ribitylamino)uracil = 6,7-dimethyl-8-(1-D-ribityl)lumazine + phosphate + 2 H2O + H(+). The protein operates within cofactor biosynthesis; riboflavin biosynthesis; riboflavin from 2-hydroxy-3-oxobutyl phosphate and 5-amino-6-(D-ribitylamino)uracil: step 1/2. Its function is as follows. Catalyzes the formation of 6,7-dimethyl-8-ribityllumazine by condensation of 5-amino-6-(D-ribitylamino)uracil with 3,4-dihydroxy-2-butanone 4-phosphate. This is the penultimate step in the biosynthesis of riboflavin. In Vibrio campbellii (strain ATCC BAA-1116), this protein is 6,7-dimethyl-8-ribityllumazine synthase.